Consider the following 414-residue polypeptide: MTQANLSETLFKPRFKHPETSTLVRRFNPGTQPAVQSTLDGKTVPHWYRMINRLMWIWRGIDAREILEVQARIVMSEADRTDSELYDTVVGYRGGNWIYEWATQAMVWQQKATQEPDQTLSGQHWLHAANLYSIAAYPHLKGDDLAEQAQALANRAYEEAAQRLPCNMREIEFPIPGGASVTGFLHMPPGEGPFPTVLMCGGLDSLQIDYYSLFERYFAPKGIAMLTLDMPSIGFSSKWKLTQDSSLLHQHALKALENIPWVDHTRVAAFGFRFGANVAVRLAYLESSRLKAVACLGPVVHALLSDPQRQASVPEMYLDVLASRLGMHDASDEALRVELNRYSLKTQGLLGRRCPTPMMSGFWKNDPFSPEEESRLITSSSLDGKLLEIPFSPVYQNFDKGLKEITRWITQRLC.

The protein belongs to the FrsA family.

The catalysed reaction is a carboxylic ester + H2O = an alcohol + a carboxylate + H(+). In terms of biological role, catalyzes the hydrolysis of esters. The protein is Esterase FrsA of Enterobacter sp. (strain 638).